A 333-amino-acid polypeptide reads, in one-letter code: Thiamine-monophosphate kinase (333 aa).

Mg(2+) is bound by residues Asp-44, Ser-58, Thr-59, and Asp-60. Position 67 (His-67) interacts with substrate. Mg(2+)-binding residues include Asp-89 and Asp-137. Residues 136–137 and Arg-162 contribute to the ATP site; that span reads GD. Asp-224 serves as a coordination point for Mg(2+). Position 226 (Ser-226) interacts with ATP. Asp-227 provides a ligand contact to Mg(2+). Positions 278 and 320 each coordinate substrate.

It belongs to the thiamine-monophosphate kinase family.

The enzyme catalyses thiamine phosphate + ATP = thiamine diphosphate + ADP. It functions in the pathway cofactor biosynthesis; thiamine diphosphate biosynthesis; thiamine diphosphate from thiamine phosphate: step 1/1. Catalyzes the ATP-dependent phosphorylation of thiamine-monophosphate (TMP) to form thiamine-pyrophosphate (TPP), the active form of vitamin B1. The polypeptide is Thiamine-monophosphate kinase (Mycobacterium tuberculosis (strain CDC 1551 / Oshkosh)).